The following is a 2142-amino-acid chain: U5 small nuclear ribonucleoprotein 200 kDa helicase (2142 aa).

Disordered regions lie at residues 52–74 (MGDR…RQKR), 211–234 (EESE…QDEG), and 366–396 (RQLD…DGGA). The segment covering 369 to 391 (DTGKSEDQEEGEARGSKRGKGDA) has biased composition (basic and acidic residues). Residues 490–673 (KAALDSDENM…FLRVKPDKGL (184 aa)) enclose the Helicase ATP-binding 1 domain. Residue 503 to 510 (APTGAGKT) participates in ATP binding. Residues 615 to 618 (DEIH) carry the DEIH box motif. One can recognise a Helicase C-terminal 1 domain in the interval 684 to 917 (SLEQQYIGVT…GTVQHLQDAV (234 aa)). In terms of domain architecture, SEC63 1 spans 981 to 1286 (VTDLGRIASH…GAETQLPVSF (306 aa)). The 175-residue stretch at 1337–1511 (NAVYNSDENV…WLGCNPNATF (175 aa)) folds into the Helicase ATP-binding 2 domain. Position 1350–1357 (1350–1357 (APTGSGKM)) interacts with ATP. Residues 1453–1456 (DELQ) carry the DELQ box motif. The region spanning 1544-1752 (PVYNAILKYS…TIENKQDAVD (209 aa)) is the Helicase C-terminal 2 domain. One can recognise an SEC63 2 domain in the interval 1811–2128 (PLNLGMIAAY…GCDQEYKFSI (318 aa)).

The protein belongs to the helicase family. SKI2 subfamily.

It is found in the nucleus. The enzyme catalyses ATP + H2O = ADP + phosphate + H(+). Its function is as follows. Catalyzes the ATP-dependent unwinding of U4/U6 RNA duplices, an essential step in the assembly of a catalytically active spliceosome. Plays a role in pre-mRNA splicing. The sequence is that of U5 small nuclear ribonucleoprotein 200 kDa helicase from Drosophila melanogaster (Fruit fly).